Reading from the N-terminus, the 87-residue chain is UPF0250 protein YPK_3025 (87 aa).

The protein belongs to the UPF0250 family.

The chain is UPF0250 protein YPK_3025 from Yersinia pseudotuberculosis serotype O:3 (strain YPIII).